The chain runs to 81 residues: Cytochrome b559 subunit alpha (81 aa).

A helical transmembrane segment spans residues 21 to 35; the sequence is IIHSITIPMLFIAGW. His-23 is a binding site for heme.

This sequence belongs to the PsbE/PsbF family. In terms of assembly, heterodimer of an alpha subunit and a beta subunit. PSII is composed of 1 copy each of membrane proteins PsbA, PsbB, PsbC, PsbD, PsbE, PsbF, PsbH, PsbI, PsbJ, PsbK, PsbL, PsbM, PsbT, PsbX, PsbY, PsbZ, Psb30/Ycf12, peripheral proteins PsbO, CyanoQ (PsbQ), PsbU, PsbV and a large number of cofactors. It forms dimeric complexes. Requires heme b as cofactor.

It is found in the cellular thylakoid membrane. In terms of biological role, this b-type cytochrome is tightly associated with the reaction center of photosystem II (PSII). PSII is a light-driven water:plastoquinone oxidoreductase that uses light energy to abstract electrons from H(2)O, generating O(2) and a proton gradient subsequently used for ATP formation. It consists of a core antenna complex that captures photons, and an electron transfer chain that converts photonic excitation into a charge separation. This is Cytochrome b559 subunit alpha from Microcystis aeruginosa (strain NIES-843 / IAM M-2473).